A 468-amino-acid chain; its full sequence is UDP-N-acetylmuramate--L-alanine ligase (468 aa).

122-128 lines the ATP pocket; it reads GSHGKTT.

This sequence belongs to the MurCDEF family.

It is found in the cytoplasm. It catalyses the reaction UDP-N-acetyl-alpha-D-muramate + L-alanine + ATP = UDP-N-acetyl-alpha-D-muramoyl-L-alanine + ADP + phosphate + H(+). Its pathway is cell wall biogenesis; peptidoglycan biosynthesis. Cell wall formation. The chain is UDP-N-acetylmuramate--L-alanine ligase from Synechococcus sp. (strain CC9902).